Consider the following 357-residue polypeptide: Phospho-N-acetylmuramoyl-pentapeptide-transferase (357 aa).

10 helical membrane passes run 4–24 (QILF…PLLI), 52–72 (TMGG…SKVI), 77–97 (PTFS…VGFL), 115–135 (AKMA…LQFA), 153–173 (FGWT…ILAM), 186–206 (LATG…VWQF), 228–248 (PLDL…FLWW), 255–275 (IFMG…LAIC), 280–300 (LLVA…VIQV), and 334–354 (FWII…AGWA).

The protein belongs to the glycosyltransferase 4 family. MraY subfamily. It depends on Mg(2+) as a cofactor.

It localises to the cell membrane. The enzyme catalyses UDP-N-acetyl-alpha-D-muramoyl-L-alanyl-gamma-D-glutamyl-meso-2,6-diaminopimeloyl-D-alanyl-D-alanine + di-trans,octa-cis-undecaprenyl phosphate = di-trans,octa-cis-undecaprenyl diphospho-N-acetyl-alpha-D-muramoyl-L-alanyl-D-glutamyl-meso-2,6-diaminopimeloyl-D-alanyl-D-alanine + UMP. It functions in the pathway cell wall biogenesis; peptidoglycan biosynthesis. In terms of biological role, catalyzes the initial step of the lipid cycle reactions in the biosynthesis of the cell wall peptidoglycan: transfers peptidoglycan precursor phospho-MurNAc-pentapeptide from UDP-MurNAc-pentapeptide onto the lipid carrier undecaprenyl phosphate, yielding undecaprenyl-pyrophosphoryl-MurNAc-pentapeptide, known as lipid I. The polypeptide is Phospho-N-acetylmuramoyl-pentapeptide-transferase (Streptomyces avermitilis (strain ATCC 31267 / DSM 46492 / JCM 5070 / NBRC 14893 / NCIMB 12804 / NRRL 8165 / MA-4680)).